Consider the following 110-residue polypeptide: Cytochrome c6 (110 aa).

A signal peptide spans M1–A25. The heme c site is built by C39, C42, H43, and M83.

It belongs to the cytochrome c family. PetJ subfamily. In terms of assembly, monomer. In terms of processing, binds 1 heme c group covalently per subunit.

The protein resides in the plastid. Its subcellular location is the chloroplast thylakoid lumen. Its function is as follows. Functions as an electron carrier between membrane-bound cytochrome b6-f and photosystem I in oxygenic photosynthesis. This is Cytochrome c6 (petJ) from Pyropia yezoensis (Susabi-nori).